Reading from the N-terminus, the 300-residue chain is Glutamyl-Q tRNA(Asp) synthetase (300 aa).

L-glutamate contacts are provided by residues 14-18 (RFAPT) and E50. A 'HIGH' region motif is present at residues 17-27 (PTPSGFLHFGS). Zn(2+)-binding residues include C106, C108, Y120, and C124. Positions 177 and 195 each coordinate L-glutamate. Residues 233–237 (KLGKS) carry the 'KMSKS' region motif. K236 lines the ATP pocket.

This sequence belongs to the class-I aminoacyl-tRNA synthetase family. GluQ subfamily. Zn(2+) serves as cofactor.

Its function is as follows. Catalyzes the tRNA-independent activation of glutamate in presence of ATP and the subsequent transfer of glutamate onto a tRNA(Asp). Glutamate is transferred on the 2-amino-5-(4,5-dihydroxy-2-cyclopenten-1-yl) moiety of the queuosine in the wobble position of the QUC anticodon. This is Glutamyl-Q tRNA(Asp) synthetase from Pseudomonas putida (strain ATCC 47054 / DSM 6125 / CFBP 8728 / NCIMB 11950 / KT2440).